An 852-amino-acid chain; its full sequence is Cytochrome P450 monooxygenase mpaDE (852 aa).

At 1–6 (MDYLII) the chain is on the lumenal side. The chain crosses the membrane as a helical span at residues 7–29 (IRITAVAVVLYLTRYVCCLYLHL). Over 30–852 (QDVPGPLFAK…DLEDAMEGTK (823 aa)) the chain is Cytoplasmic. Cysteine 448 provides a ligand contact to heme.

This sequence belongs to the cytochrome P450 family. It depends on heme as a cofactor.

It is found in the endoplasmic reticulum membrane. The enzyme catalyses 5-methylorsellinate + reduced [NADPH--hemoprotein reductase] + O2 = 4,6-dihydroxy-2-(hydroxymethyl)-3-methylbenzoate + oxidized [NADPH--hemoprotein reductase] + H2O + H(+). It catalyses the reaction 4,6-dihydroxy-2-(hydroxymethyl)-3-methylbenzoate + H(+) = 5,7-dihydroxy-4-methylphthalide + H2O. It participates in secondary metabolite biosynthesis; terpenoid biosynthesis. Its function is as follows. Cytochrome P450 monooxygenase; part of the gene cluster that mediates the biosynthesis of mycophenolic acid (MPA), the first isolated antibiotic natural product in the world obtained from a culture of Penicillium brevicompactum in 1893. MpaDE is an endoplasmic reticulum-bound enzyme that catalyzes the conversion of 5-methylorsellinic acid (5MOA) into the phthalide compound 5,7-dihydroxy-4,6-dimethylphthalide (DHMP). MpaDE first catalyzes hydroxylation of 5-MOA to 4,6-dihydroxy-2-(hydroxymethyl)-3-methylbenzoic acid (DHMB), and then acts as a lactone synthase that catalyzes the ring closure to convert DHMB into DHMP. The first step of the pathway is the synthesis of 5-methylorsellinic acid (5MOA) by the cytosolic polyketide synthase mpaC. 5MOA is then converted to the phthalide compound 5,7-dihydroxy-4,6-dimethylphthalide (DHMP) by the endoplasmic reticulum-bound cytochrome P450 monooxygenase mpaDE. MpaDE first catalyzes hydroxylation of 5-MOA to 4,6-dihydroxy-2-(hydroxymethyl)-3-methylbenzoic acid (DHMB). MpaDE then acts as a lactone synthase that catalyzes the ring closure to convert DHMB into DHMP. The next step is the prenylation of DHMP by the Golgi apparatus-associated prenyltransferase mpaA to yield farnesyl-DHMP (FDHMP). The ER-bound oxygenase mpaB then mediates the oxidative cleavage the C19-C20 double bond in FDHMP to yield FDHMP-3C via a mycophenolic aldehyde intermediate. The O-methyltransferase mpaG catalyzes the methylation of FDHMP-3C to yield MFDHMP-3C. After the cytosolic methylation of FDHMP-3C, MFDHMP-3C enters into peroxisomes probably via free diffusion due to its low molecular weight. Upon a peroxisomal CoA ligation reaction, catalyzed by a beta-oxidation component enzyme acyl-CoA ligase ACL891, MFDHMP-3C-CoA would then be restricted to peroxisomes for the following beta-oxidation pathway steps. The peroxisomal beta-oxidation machinery than converts MFDHMP-3C-CoA into MPA_CoA, via a beta-oxidation chain-shortening process. Finally mpaH acts as a peroxisomal acyl-CoA hydrolase with high substrate specificity toward MPA-CoA to release the final product MPA. In Penicillium roqueforti (strain FM164), this protein is Cytochrome P450 monooxygenase mpaDE.